The following is a 357-amino-acid chain: Protein phosphatase 1 regulatory subunit 42 (357 aa).

LRR repeat units follow at residues 29–50 (KITHINFSDKNIDAIEDLSLCK), 51–72 (NLSVLYLYDNCISQITNLNYAT), 73–94 (NLTHLYLQNNCIPCIENLRSLK), 95–116 (KLEKLYLGGNYIAVIEGLEGLG), 117–138 (ELRELHVENQRLPLGEKLLFDP), 147–168 (SLSILNISNNNIDDIRDLEILE), and 169–190 (NLNQLIAVDNQLLHVKDLEFLL). An LRRCT domain is found at 204 to 242 (NPVCLKPKYRDRLILVSKSLEFLDGKEIKNIERQFLMNW).

Interacts with PPP1CC isoform gamma-2; the interaction is direct. Interacts with actin, dynein, KIF5B, KIFC1 and tubulin. Associates with microtubules. Phosphorylated; in the testis.

It is found in the cytoplasm. It localises to the cytoskeleton. The protein resides in the microtubule organizing center. The protein localises to the centrosome. In terms of biological role, regulates phosphatase activity of protein phosphatase 1 (PP1) complexes in the testis. The protein is Protein phosphatase 1 regulatory subunit 42 (PPP1R42) of Macaca fascicularis (Crab-eating macaque).